The sequence spans 168 residues: Ribosome maturation factor RimM (168 aa).

Positions 93–167 (ENEFYQSDLV…YITLNMPEFI (75 aa)) constitute a PRC barrel domain.

The protein belongs to the RimM family. Binds ribosomal protein uS19.

The protein localises to the cytoplasm. In terms of biological role, an accessory protein needed during the final step in the assembly of 30S ribosomal subunit, possibly for assembly of the head region. Essential for efficient processing of 16S rRNA. May be needed both before and after RbfA during the maturation of 16S rRNA. It has affinity for free ribosomal 30S subunits but not for 70S ribosomes. The chain is Ribosome maturation factor RimM from Wolbachia sp. subsp. Brugia malayi (strain TRS).